A 198-amino-acid polypeptide reads, in one-letter code: Holliday junction branch migration complex subunit RuvA (198 aa).

A domain I region spans residues 1 to 61; the sequence is MILYRIGEII…EYQYATYAFK (61 aa). A domain II region spans residues 62 to 139; it reads DFKERLLFVD…KMISPKDAAK (78 aa). Residues 140–144 form a flexible linker region; the sequence is INETT. The domain III stretch occupies residues 144-198; the sequence is TNTLSEVKETLKMVGFKTKQIDGALSKISSTDDVEKMIEEAIKLMSTQNYESATA.

The protein belongs to the RuvA family. Homotetramer. Forms an RuvA(8)-RuvB(12)-Holliday junction (HJ) complex. HJ DNA is sandwiched between 2 RuvA tetramers; dsDNA enters through RuvA and exits via RuvB. An RuvB hexamer assembles on each DNA strand where it exits the tetramer. Each RuvB hexamer is contacted by two RuvA subunits (via domain III) on 2 adjacent RuvB subunits; this complex drives branch migration. In the full resolvosome a probable DNA-RuvA(4)-RuvB(12)-RuvC(2) complex forms which resolves the HJ.

Its subcellular location is the cytoplasm. In terms of biological role, the RuvA-RuvB-RuvC complex processes Holliday junction (HJ) DNA during genetic recombination and DNA repair, while the RuvA-RuvB complex plays an important role in the rescue of blocked DNA replication forks via replication fork reversal (RFR). RuvA specifically binds to HJ cruciform DNA, conferring on it an open structure. The RuvB hexamer acts as an ATP-dependent pump, pulling dsDNA into and through the RuvAB complex. HJ branch migration allows RuvC to scan DNA until it finds its consensus sequence, where it cleaves and resolves the cruciform DNA. The sequence is that of Holliday junction branch migration complex subunit RuvA from Mycoplasmopsis agalactiae (strain NCTC 10123 / CIP 59.7 / PG2) (Mycoplasma agalactiae).